We begin with the raw amino-acid sequence, 491 residues long: Transcription factor AP-2-alpha (491 aa).

A disordered region spans residues 74–161 (GASNGTARLP…GQRQSQESGL (88 aa)). The short motif at 111-116 (YFPPPY) is the PPxY motif element. 2 stretches are compositionally biased toward low complexity: residues 119–128 (IYPQSQDPYS) and 142–155 (QPQP…GQRQ). Residues Lys231 and Lys238 each participate in a glycyl lysine isopeptide (Lys-Gly) (interchain with G-Cter in SUMO2) cross-link. At Ser293 the chain carries Phosphoserine; by PKA. Residues 334 to 464 (RRKAANVTLL…YLTEALKAMD (131 aa)) are H-S-H (helix-span-helix), dimerization. Polar residues predominate over residues 468-481 (LSNNPNSHTDNSAK). Residues 468–491 (LSNNPNSHTDNSAKSSDKEEKHRK) are disordered. The span at 482 to 491 (SSDKEEKHRK) shows a compositional bias: basic and acidic residues.

The protein belongs to the AP-2 family. Binds DNA as a dimer. Can form homodimers or heterodimers with other AP-2 family members. Interacts with WWOX. Interacts with CITED4. Interacts with UBE2I. Interacts with RALBP1 in a complex also containing EPN1 and NUMB during interphase and mitosis. Interacts with KCTD1; this interaction represses transcription activation. Interacts (via C-terminus) with CITED2 (via C-terminus); the interaction stimulates TFAP2A-transcriptional activation. Interacts (via N-terminus) with EP300 (via N-terminus); the interaction requires CITED2. Interacts with KCTD15; this interaction inhibits TFAP2A transcriptional activation.

The protein localises to the nucleus. Sequence-specific DNA-binding protein that interacts with inducible viral and cellular enhancer elements to regulate transcription of selected genes. AP-2 factors bind to the consensus sequence 5'-GCCNNNGGC-3' and activate genes involved in a large spectrum of important biological functions including proper eye, face, body wall, limb and neural tube development. They also suppress a number of genes including MCAM/MUC18, C/EBP alpha and MYC. AP-2-alpha is the only AP-2 protein required for early morphogenesis of the lens vesicle. Together with the CITED2 coactivator, stimulates the PITX2 P1 promoter transcription activation. Associates with chromatin to the PITX2 P1 promoter region. The protein is Transcription factor AP-2-alpha (TFAP2A) of Ovis aries (Sheep).